A 341-amino-acid polypeptide reads, in one-letter code: Glycerol-3-phosphate dehydrogenase [NAD(P)+] (341 aa).

The NADPH site is built by S15, W16, R36, and K110. 3 residues coordinate sn-glycerol 3-phosphate: K110, G139, and S141. A143 contributes to the NADPH binding site. Residues K194, D247, S257, R258, and N259 each coordinate sn-glycerol 3-phosphate. Residue K194 is the Proton acceptor of the active site. R258 contacts NADPH. Residues V282 and E284 each coordinate NADPH.

The protein belongs to the NAD-dependent glycerol-3-phosphate dehydrogenase family.

The protein localises to the cytoplasm. It carries out the reaction sn-glycerol 3-phosphate + NAD(+) = dihydroxyacetone phosphate + NADH + H(+). The catalysed reaction is sn-glycerol 3-phosphate + NADP(+) = dihydroxyacetone phosphate + NADPH + H(+). The protein operates within membrane lipid metabolism; glycerophospholipid metabolism. Functionally, catalyzes the reduction of the glycolytic intermediate dihydroxyacetone phosphate (DHAP) to sn-glycerol 3-phosphate (G3P), the key precursor for phospholipid synthesis. The chain is Glycerol-3-phosphate dehydrogenase [NAD(P)+] from Xanthomonas euvesicatoria pv. vesicatoria (strain 85-10) (Xanthomonas campestris pv. vesicatoria).